The primary structure comprises 81 residues: Conotoxin ArMKLT2-0311 (81 aa).

A signal peptide spans 1-22 (MKLTCVLIVALLFLTACQLTTA). Residues 23 to 34 (DDSRDKQEDPLV) show a composition bias toward basic and acidic residues. A disordered region spans residues 23–45 (DDSRDKQEDPLVRSHRKMQKSED). A propeptide spanning residues 23–51 (DDSRDKQEDPLVRSHRKMQKSEDPKMAER) is cleaved from the precursor. Cystine bridges form between C52/C67, C59/C71, and C66/C80.

This sequence belongs to the conotoxin O1 superfamily. In terms of tissue distribution, expressed by the venom duct.

It localises to the secreted. The polypeptide is Conotoxin ArMKLT2-0311 (Conus arenatus (Sand-dusted cone)).